The following is a 377-amino-acid chain: N-acetyldiaminopimelate deacetylase (377 aa).

Asp-69 is an active-site residue. The Proton acceptor role is filled by Glu-128.

This sequence belongs to the peptidase M20A family. N-acetyldiaminopimelate deacetylase subfamily.

The catalysed reaction is N-acetyl-(2S,6S)-2,6-diaminopimelate + H2O = (2S,6S)-2,6-diaminopimelate + acetate. The protein operates within amino-acid biosynthesis; L-lysine biosynthesis via DAP pathway; LL-2,6-diaminopimelate from (S)-tetrahydrodipicolinate (acetylase route): step 3/3. Its function is as follows. Catalyzes the conversion of N-acetyl-diaminopimelate to diaminopimelate and acetate. This is N-acetyldiaminopimelate deacetylase from Brevibacillus brevis (strain 47 / JCM 6285 / NBRC 100599).